The following is a 406-amino-acid chain: Sprouty-related, EVH1 domain-containing protein 1 (406 aa).

The region spanning 3–120 (GEQEPDDSYA…RGIRRAIEDL (118 aa)) is the WH1 domain. The disordered stretch occupies residues 124–154 (LPASCHGESETSEDGPQVNKEDHYSTHNNDH). The span at 142-154 (NKEDHYSTHNNDH) shows a compositional bias: basic and acidic residues. Positions 195 to 247 (PIRHVSFQDEDEIVRINPRDMIIRRYADYRHPDIFRNDVDREEPEDVTFFTKT) constitute a KBD domain. The region spanning 296-404 (SCVYCQERFN…CGCCGGKHKA (109 aa)) is the SPR domain.

In terms of processing, palmitoylated by ZDHHC17/HIP14. Ubiquitinated. Post-translationally, phosphorylated on tyrosine.

It is found in the cell membrane. Functionally, tyrosine kinase substrate that inhibits growth-factor-mediated activation of MAP kinase. The chain is Sprouty-related, EVH1 domain-containing protein 1 (spred1) from Xenopus tropicalis (Western clawed frog).